Here is a 589-residue protein sequence, read N- to C-terminus: Peroxisomal biogenesis factor 8 (589 aa).

The Microbody targeting signal signature appears at 587 to 589 (SKL).

It is found in the peroxisome matrix. Required for peroxisome assembly. The polypeptide is Peroxisomal biogenesis factor 8 (PEX8) (Saccharomyces cerevisiae (strain ATCC 204508 / S288c) (Baker's yeast)).